The primary structure comprises 605 residues: MHKYRTHNCNELQLSNVGQEVKLSGWVHRRRDHGNLVFIDLRDHYGITQIVFTDQNQQLMYDASRLCYESVITVSGTVVARSLDTINNKLPTGYVEVLAMECIVESASSPLPFVINNEKEAPEESRLKHRFLDLRREKLHNNIILRSQVIAHIRHLMIARGFTELQTPILTSSSPEGARDFLVPSRIHPGKFYALPQAPQQFKQLLMVAGFDRYFQIAPCFRDEDARADRSPGEFYQLDLEMSFVTQEDIFNTIEPVLYDLFTKFTNKTVSNTPFVRIPYNESMLKYGSDKPDLRNPIIISDVTEVFRDSNFTIFRENIKKGSVVHAIPAPQAASLPRSFFDKMIEFAISKGARGLGYIQFSESGEAKGPLSKFLTGQQLEILKATANTSNGDAVFFVSDKKDEAVKLCGKVRIKLGEELNLLEKDCFKFCWITDFPFYELNEETGKIDFSHNPFSMPQGGIDALEQAKTTEELLALTAYQYDIVCNGIELSSGAIRNHKPEIMYKAFSIAGYSAEEVEQRFGAMIKAFRFGAPPHGGIAPGIDRIVMLLAEATNIREIIAFPLNQQAEDLLMNAPSYVEEKALKELSIMLSPSSRKIHKKNTNL.

E176 is a binding site for L-aspartate. The aspartate stretch occupies residues 200 to 203; it reads QQFK. The L-aspartate site is built by R222 and H452. ATP is bound at residue 222–224; it reads RDE. E490 provides a ligand contact to ATP. L-aspartate is bound at residue R497. 542-545 contacts ATP; sequence GIDR.

This sequence belongs to the class-II aminoacyl-tRNA synthetase family. Type 1 subfamily. As to quaternary structure, homodimer.

The protein resides in the cytoplasm. It carries out the reaction tRNA(Asx) + L-aspartate + ATP = L-aspartyl-tRNA(Asx) + AMP + diphosphate. In terms of biological role, aspartyl-tRNA synthetase with relaxed tRNA specificity since it is able to aspartylate not only its cognate tRNA(Asp) but also tRNA(Asn). Reaction proceeds in two steps: L-aspartate is first activated by ATP to form Asp-AMP and then transferred to the acceptor end of tRNA(Asp/Asn). This chain is Aspartate--tRNA(Asp/Asn) ligase, found in Rickettsia prowazekii (strain Madrid E).